A 129-amino-acid chain; its full sequence is Large ribosomal subunit protein uL22 (129 aa).

It belongs to the universal ribosomal protein uL22 family. Part of the 50S ribosomal subunit.

In terms of biological role, this protein binds specifically to 23S rRNA; its binding is stimulated by other ribosomal proteins, e.g. L4, L17, and L20. It is important during the early stages of 50S assembly. It makes multiple contacts with different domains of the 23S rRNA in the assembled 50S subunit and ribosome. The globular domain of the protein is located near the polypeptide exit tunnel on the outside of the subunit, while an extended beta-hairpin is found that lines the wall of the exit tunnel in the center of the 70S ribosome. The sequence is that of Large ribosomal subunit protein uL22 from Mesorhizobium japonicum (strain LMG 29417 / CECT 9101 / MAFF 303099) (Mesorhizobium loti (strain MAFF 303099)).